The sequence spans 654 residues: APC membrane recruitment protein 2 (654 aa).

Disordered regions lie at residues 1-105, 224-289, 316-369, and 381-654; these read MEVQ…TAPL, ECGN…QSEQ, IIAD…PQVS, and PAHQ…QSRK. Positions 9–18 are enriched in pro residues; the sequence is EPPPCDPQPP. Positions 60 to 70 are enriched in basic and acidic residues; sequence ELVRSKTHDGL. The span at 427–454 shows a compositional bias: basic and acidic residues; the sequence is PQKDEDSPAPRRAEPVLHHAPARLEKRP. Over residues 468–479 the composition is skewed to polar residues; sequence SGSSKTGKQQPS. Positions 565–575 are enriched in low complexity; it reads SPKCSSSATSS. Residues 576-586 are compositionally biased toward polar residues; sequence FRSMKGSTSLP. Residues 601–621 are compositionally biased toward low complexity; sequence SHSSSQGALSSNLSPTSTTPP. Residues 644 to 654 are compositionally biased toward polar residues; that stretch reads GKSTSTSQSRK.

Belongs to the Amer family.

It is found in the cell membrane. Negative regulator of the canonical Wnt signaling pathway involved in neuroectodermal patterning. Acts by specifically binding phosphatidylinositol 4,5-bisphosphate (PtdIns(4,5)P2), translocating to the cell membrane and interacting with key regulators of the canonical Wnt signaling pathway, such as components of the beta-catenin destruction complex. This Danio rerio (Zebrafish) protein is APC membrane recruitment protein 2 (amer2).